We begin with the raw amino-acid sequence, 169 residues long: Peptide deformylase (169 aa).

Fe cation contacts are provided by Cys-91 and His-133. The active site involves Glu-134. His-137 is a Fe cation binding site.

It belongs to the polypeptide deformylase family. Requires Fe(2+) as cofactor.

It carries out the reaction N-terminal N-formyl-L-methionyl-[peptide] + H2O = N-terminal L-methionyl-[peptide] + formate. Removes the formyl group from the N-terminal Met of newly synthesized proteins. Requires at least a dipeptide for an efficient rate of reaction. N-terminal L-methionine is a prerequisite for activity but the enzyme has broad specificity at other positions. The chain is Peptide deformylase from Salmonella agona (strain SL483).